The sequence spans 422 residues: Succinate--CoA ligase [ADP-forming] subunit beta, mitochondrial (422 aa).

The N-terminal 27 residues, 1-27 (MVRGSLGKLASRALSVAGKWQHQQLRR), are a transit peptide targeting the mitochondrion. Positions 36–279 (AELMGKYGIN…TTQEDPREVA (244 aa)) constitute an ATP-grasp domain. Residues lysine 75, 82-84 (GRG), and glutamate 142 contribute to the ATP site. Mg(2+)-binding residues include asparagine 234 and aspartate 248. Residues asparagine 299 and 356–358 (GIM) contribute to the substrate site.

The protein belongs to the succinate/malate CoA ligase beta subunit family. In terms of assembly, heterodimer of an alpha and a beta subunit. The cofactor is Mg(2+).

It localises to the mitochondrion. It carries out the reaction succinate + ATP + CoA = succinyl-CoA + ADP + phosphate. Its pathway is carbohydrate metabolism; tricarboxylic acid cycle; succinate from succinyl-CoA (ligase route): step 1/1. Functionally, succinyl-CoA synthetase functions in the citric acid cycle (TCA), coupling the hydrolysis of succinyl-CoA to the synthesis of ATP and thus represents the only step of substrate-level phosphorylation in the TCA. The beta subunit provides nucleotide specificity of the enzyme and binds the substrate succinate, while the binding sites for coenzyme A and phosphate are found in the alpha subunit. The protein is Succinate--CoA ligase [ADP-forming] subunit beta, mitochondrial of Oryza sativa subsp. japonica (Rice).